The primary structure comprises 153 residues: Pheromone-binding protein Gp-9 (153 aa).

An N-terminal signal peptide occupies residues 1–19 (MKTFVLHIFIFALVAFASA). 3 disulfides stabilise this stretch: Cys37–Cys77, Cys73–Cys129, and Cys118–Cys138.

Belongs to the PBP/GOBP family. In terms of assembly, homodimer.

The protein localises to the secreted. Its function is as follows. Colony queen number, a major feature of social organization, is associated with worker genotype for Gp-9. Colonies are headed by either a single reproductive queen (monogyne form) or multiple queens (polygyne form). Differences in worker Gp-9 genotypes between social forms may cause differences in workers' abilities to recognize queens and regulate their numbers. The protein is Pheromone-binding protein Gp-9 of Solenopsis invicta (Red imported fire ant).